The primary structure comprises 144 residues: 3-hydroxyacyl-[acyl-carrier-protein] dehydratase FabZ (144 aa).

The active site involves His51.

The protein belongs to the thioester dehydratase family. FabZ subfamily.

The protein localises to the cytoplasm. The enzyme catalyses a (3R)-hydroxyacyl-[ACP] = a (2E)-enoyl-[ACP] + H2O. Its function is as follows. Involved in unsaturated fatty acids biosynthesis. Catalyzes the dehydration of short chain beta-hydroxyacyl-ACPs and long chain saturated and unsaturated beta-hydroxyacyl-ACPs. This Enterococcus faecalis (strain ATCC 700802 / V583) protein is 3-hydroxyacyl-[acyl-carrier-protein] dehydratase FabZ (fabZ1).